Consider the following 182-residue polypeptide: MVFGKRYRDKETGIIYDENGRPCKTCNIFSSFRNVAQQPNSSTVPEVKSNTQLESKQSSIDCNTNAIPDSVSFPRLPDVAELGRSTWTFLHAMAANFPKNPTPTQQNDMSSFLYNFSKFYPCWSCAEDLRIWMAKYGNSPRVDSRESLCEWICEAHNDVNERLGKPLFNCQVWSKKASELAD.

The region spanning 75 to 177 is the ERV/ALR sulfhydryl oxidase domain; sequence RLPDVAELGR…FNCQVWSKKA (103 aa). FAD is bound by residues 81–87, histidine 91, and tyrosine 120; that span reads ELGRSTW. Cystine bridges form between cysteine 122–cysteine 125 and cysteine 153–cysteine 170. Residues 153–165 and 176–177 each bind FAD; these read CEAH…RLGK and KA.

Requires FAD as cofactor.

It is found in the mitochondrion intermembrane space. The catalysed reaction is 2 R'C(R)SH + O2 = R'C(R)S-S(R)CR' + H2O2. In terms of biological role, FAD-dependent sulfhydryl oxidase that catalyzes disulfide bond formation. Required for the import and folding of small cysteine-containing proteins in the mitochondrial intermembrane space (IMS). The chain is Mitochondrial FAD-linked sulfhydryl oxidase erv1 (erv1) from Schizosaccharomyces pombe (strain 972 / ATCC 24843) (Fission yeast).